A 327-amino-acid chain; its full sequence is Malate dehydrogenase (327 aa).

Residue 12-18 (GAAGQIA) participates in NAD(+) binding. Substrate contacts are provided by Arg93 and Arg99. Residues Asn106, Gln113, and 130 to 132 (VGN) contribute to the NAD(+) site. Substrate is bound by residues Asn132 and Arg163. His188 (proton acceptor) is an active-site residue.

This sequence belongs to the LDH/MDH superfamily. MDH type 2 family.

It carries out the reaction (S)-malate + NAD(+) = oxaloacetate + NADH + H(+). Its function is as follows. Catalyzes the reversible oxidation of malate to oxaloacetate. This is Malate dehydrogenase from Burkholderia mallei (strain NCTC 10247).